Reading from the N-terminus, the 3093-residue chain is Intermembrane lipid transfer protein VPS13A (3093 aa).

One can recognise a Chorein N-terminal domain in the interval 3–116 (FESVVVDVLN…LMEAKQQELK (114 aa)). Residues 373–406 (LTSKKPPGELLVSLEELEKTLDVLNITIARQQAE) form a TPR 1 repeat. At serine 839 the chain carries Phosphoserine. Positions 842 to 848 (EFFDAPC) match the FFAT motif. A Phosphoserine modification is found at serine 1416. The region spanning 2209–2454 (VAFHSPYWMV…VFYTWADPVG (246 aa)) is the SHR-BD domain. Residues 2860–2898 (ILGLDVLGNPFGLIREFSEGVEAFFYEPYQGAIQGPEEF) form a TPR 2 repeat. Positions 2953–3027 (PAGFREGITR…SSTFQGIKRA (75 aa)) are required for lipid droplet localization.

It belongs to the VPS13 family. Interacts (via FFAT motif) with VAPA and VAPB. Interacts with RAB7A. Interacts with XK.

The protein resides in the mitochondrion outer membrane. The protein localises to the endoplasmic reticulum membrane. Its subcellular location is the endosome membrane. It localises to the lysosome membrane. It is found in the lipid droplet. The protein resides in the golgi apparatus. The protein localises to the cytoplasmic vesicle. Its subcellular location is the secretory vesicle. It localises to the neuronal dense core vesicle. Its function is as follows. Mediates the transfer of lipids between membranes at organelle contact sites. Required for the formation or stabilization of ER-mitochondria contact sites which enable transfer of lipids between the ER and mitochondria. Negatively regulates lipid droplet size and motility. Required for efficient lysosomal protein degradation. The protein is Intermembrane lipid transfer protein VPS13A (VPS13A) of Macaca fascicularis (Crab-eating macaque).